The chain runs to 202 residues: Cryptic protein (202 aa).

Residues 1 to 35 (MRANSPTQGISLKMHQARPLFLVTVALQLIGLGYS) form the signal peptide. A glycan (N-linked (GlcNAc...) asparagine) is linked at N65. In terms of domain architecture, EGF-like spans 94-123 (PVSRCCHNGGTCVLGSFCVCPAYFTGRYCE). Intrachain disulfides connect C98–C105, C99–C111, and C113–C122. D166 is lipidated: GPI-anchor amidated aspartate. A propeptide spans 167 to 202 (LKSFLSSGARGSRECSIPSLLLLVLCLLLQGVAGKG) (removed in mature form).

This sequence belongs to the EGF-CFC (Cripto-1/FRL1/Cryptic) family. N-glycosylated. As to expression, no expressed in adult tissues.

Its subcellular location is the cell membrane. It localises to the secreted. Its function is as follows. Nodal coreceptor involved in the correct establishment of the left-right axis. May play a role in mesoderm and/or neural patterning during gastrulation. This is Cryptic protein (Cfc1) from Mus musculus (Mouse).